Reading from the N-terminus, the 377-residue chain is Probable O-methyltransferase 3 (377 aa).

Aspartate 241 is a binding site for S-adenosyl-L-methionine. The Proton acceptor role is filled by histidine 279.

This sequence belongs to the class I-like SAM-binding methyltransferase superfamily. Cation-independent O-methyltransferase family. Highly expressed in lupulin glands. Detected in early-, mid- and late-stage cones.

The protein is Probable O-methyltransferase 3 of Humulus lupulus (European hop).